The primary structure comprises 268 residues: 1,4-dihydroxy-2-naphthoyl-CoA synthase (268 aa).

Substrate is bound by residues Val-30–Leu-31, Val-70–Gln-74, Tyr-114–Gly-118, Ser-140, and Ser-146. Residue Gln-139–Gly-141 participates in hydrogencarbonate binding.

It belongs to the enoyl-CoA hydratase/isomerase family. MenB subfamily. Hydrogencarbonate serves as cofactor.

It localises to the plastid. Its subcellular location is the chloroplast. The enzyme catalyses 2-succinylbenzoyl-CoA + H(+) = 1,4-dihydroxy-2-naphthoyl-CoA + H2O. The protein operates within quinol/quinone metabolism; 1,4-dihydroxy-2-naphthoate biosynthesis; 1,4-dihydroxy-2-naphthoate from chorismate: step 6/7. It participates in quinol/quinone metabolism; menaquinone biosynthesis. In terms of biological role, converts o-succinylbenzoyl-CoA (OSB-CoA) to 1,4-dihydroxy-2-naphthoyl-CoA (DHNA-CoA). In Cyanidium caldarium (Red alga), this protein is 1,4-dihydroxy-2-naphthoyl-CoA synthase (menB).